Consider the following 318-residue polypeptide: N-acetyl-gamma-glutamyl-phosphate reductase (318 aa).

Cys132 is a catalytic residue.

Belongs to the NAGSA dehydrogenase family. Type 1 subfamily.

Its subcellular location is the cytoplasm. The catalysed reaction is N-acetyl-L-glutamate 5-semialdehyde + phosphate + NADP(+) = N-acetyl-L-glutamyl 5-phosphate + NADPH + H(+). It functions in the pathway amino-acid biosynthesis; L-arginine biosynthesis; N(2)-acetyl-L-ornithine from L-glutamate: step 3/4. Functionally, catalyzes the NADPH-dependent reduction of N-acetyl-5-glutamyl phosphate to yield N-acetyl-L-glutamate 5-semialdehyde. The sequence is that of N-acetyl-gamma-glutamyl-phosphate reductase from Azobacteroides pseudotrichonymphae genomovar. CFP2.